A 95-amino-acid chain; its full sequence is Beta-defensin 132 (95 aa).

The signal sequence occupies residues 1 to 22; it reads MKFLLLVLAALRFLTQVIPASA. 3 cysteine pairs are disulfide-bonded: Cys-27/Cys-55, Cys-35/Cys-49, and Cys-39/Cys-56. The disordered stretch occupies residues 72 to 95; sequence GNHWQSRRRNTQRKDKKQQTTVTS. A compositionally biased stretch (basic residues) spans 76 to 87; it reads QSRRRNTQRKDK.

Belongs to the beta-defensin family.

Its subcellular location is the secreted. Its function is as follows. Has antibacterial activity. In Pongo pygmaeus (Bornean orangutan), this protein is Beta-defensin 132 (DEFB132).